Reading from the N-terminus, the 188-residue chain is Crossover junction endodeoxyribonuclease RuvC (188 aa).

Active-site residues include Asp-7, Glu-68, and Asp-141. Asp-7, Glu-68, and Asp-141 together coordinate Mg(2+).

It belongs to the RuvC family. In terms of assembly, homodimer which binds Holliday junction (HJ) DNA. The HJ becomes 2-fold symmetrical on binding to RuvC with unstacked arms; it has a different conformation from HJ DNA in complex with RuvA. In the full resolvosome a probable DNA-RuvA(4)-RuvB(12)-RuvC(2) complex forms which resolves the HJ. Mg(2+) serves as cofactor.

It is found in the cytoplasm. It carries out the reaction Endonucleolytic cleavage at a junction such as a reciprocal single-stranded crossover between two homologous DNA duplexes (Holliday junction).. Its function is as follows. The RuvA-RuvB-RuvC complex processes Holliday junction (HJ) DNA during genetic recombination and DNA repair. Endonuclease that resolves HJ intermediates. Cleaves cruciform DNA by making single-stranded nicks across the HJ at symmetrical positions within the homologous arms, yielding a 5'-phosphate and a 3'-hydroxyl group; requires a central core of homology in the junction. The consensus cleavage sequence is 5'-(A/T)TT(C/G)-3'. Cleavage occurs on the 3'-side of the TT dinucleotide at the point of strand exchange. HJ branch migration catalyzed by RuvA-RuvB allows RuvC to scan DNA until it finds its consensus sequence, where it cleaves and resolves the cruciform DNA. This is Crossover junction endodeoxyribonuclease RuvC from Mycobacterium avium (strain 104).